We begin with the raw amino-acid sequence, 520 residues long: Transcription factor MYB33 (520 aa).

Residues 1 to 24 form a disordered region; sequence MSYTSTDSDHNESPAADDNGSDCR. HTH myb-type domains follow at residues 29–81 and 82–136; these read GHAL…ANHL and RPNL…KRRQ. 2 DNA-binding regions (H-T-H motif) span residues 57–81 and 109–132; these read WNAV…ANHL and WARM…NTRI. Over residues 331–342 the composition is skewed to low complexity; the sequence is SSSPPHSDLLDP. 2 disordered regions span residues 331-359 and 426-447; these read SSSP…GEES and EMST…RKPL.

As to expression, mostly expressed in stems, shoot apices, flowers and floral shoot tips, and, to a lower extent, in roots (e.g. root tips), seedlings, leaves and siliques.

It is found in the nucleus. Its function is as follows. Transcriptional activator of alpha-amylase expression that binds to 5'-CAACTGTC-3' motif in target gene promoter. Positive regulator of abscisic acid (ABA) responses leading to growth arrest during seed germination. In vegetative tissues, inhibits growth by reducing cell proliferation. Promotes the expression of aleurone-related genes (e.g. CP1, CP, GASA1, BXL1 and BXL2) in seeds. Together with MYB65 and MYB101, promotes the programmed cell death (PCD) the vacuolation of protein storage vacuoles (PSVs) in the aleurone layers during seed germination. Binds to a GARE site (GA-response element) in the LEAFY promoter, essential for its gibberellic acid (GA)-mediated induction. Together with MYB65, facilitates anther and tapetum development. The chain is Transcription factor MYB33 from Arabidopsis thaliana (Mouse-ear cress).